The primary structure comprises 185 residues: Ribosome-recycling factor (185 aa).

This sequence belongs to the RRF family.

It is found in the cytoplasm. Functionally, responsible for the release of ribosomes from messenger RNA at the termination of protein biosynthesis. May increase the efficiency of translation by recycling ribosomes from one round of translation to another. The chain is Ribosome-recycling factor from Pectobacterium carotovorum subsp. carotovorum (strain PC1).